The sequence spans 310 residues: Probable endonuclease 4 (310 aa).

The interval Met-1 to Val-31 is disordered. Zn(2+) contacts are provided by His-94, His-134, Glu-173, Asp-207, His-210, His-244, Asp-257, His-259, and Glu-289.

This sequence belongs to the AP endonuclease 2 family. Requires Zn(2+) as cofactor.

The enzyme catalyses Endonucleolytic cleavage to 5'-phosphooligonucleotide end-products.. In terms of biological role, endonuclease IV plays a role in DNA repair. It cleaves phosphodiester bonds at apurinic or apyrimidinic (AP) sites, generating a 3'-hydroxyl group and a 5'-terminal sugar phosphate. This chain is Probable endonuclease 4, found in Streptomyces avermitilis (strain ATCC 31267 / DSM 46492 / JCM 5070 / NBRC 14893 / NCIMB 12804 / NRRL 8165 / MA-4680).